The sequence spans 569 residues: MTQHWPAGEIARMILDGFDDYREHFRRITLGARERFEQARWQDIQRAAAARINLYEQKVGEVNGWLRDGFDEEVLLEVEQWPLVKSAYIRLIDPRLDDELAETWYNSLFCSLFSHDQISDGCMFIHTTRPSIRSHERAAQTRTYMPDGSLKGLVRAIFRDYAFDYGDLESDLSRLEEQLRDCLPDWVCKDPALAVELFVPVLYRNKGAYLVGRLYNSDEQWPLVIPLLHREGHGIEADALITDEAEVSIIFSFTRSYFMVDVPVPAEFVNFLKRILPGKHIAELYTSIGFYKHGKSEFYRALINHLASTDDRFIMAPGVRGMVMSVFTLPGFNTVFKIIKDRFSPSKTVDRATVIDKYRLVKSVDRVGRMADTQEFADFRFPRGKFEPECLAELLEVAPSTVAVEGDTVLVRHCWTERRMIPLNLYLEQASEGQVLEALEDYGLAIKQLAAANIFPGDMLLKNFGVTRHGRVVFYDYDEISYLTEVNFRHIPPPRYPEDEMSGEPWYSIGPHDVFPEEFPPFLFADMGQRRLFSRLHGELYDADYWKGLQASIREGKVIDVFPYRRKGR.

Residues 316-322 (APGVRGM) and lysine 337 contribute to the ATP site. Residue aspartate 372 is part of the active site.

Belongs to the AceK family.

It is found in the cytoplasm. The catalysed reaction is L-seryl-[isocitrate dehydrogenase] + ATP = O-phospho-L-seryl-[isocitrate dehydrogenase] + ADP + H(+). In terms of biological role, bifunctional enzyme which can phosphorylate or dephosphorylate isocitrate dehydrogenase (IDH) on a specific serine residue. This is a regulatory mechanism which enables bacteria to bypass the Krebs cycle via the glyoxylate shunt in response to the source of carbon. When bacteria are grown on glucose, IDH is fully active and unphosphorylated, but when grown on acetate or ethanol, the activity of IDH declines drastically concomitant with its phosphorylation. The sequence is that of Isocitrate dehydrogenase kinase/phosphatase from Pseudomonas putida (strain W619).